We begin with the raw amino-acid sequence, 212 residues long: Adenylate kinase (212 aa).

Residue 10–15 (GAGKGT) participates in ATP binding. The interval 30-59 (STGDMFRAAMANQTEMGRLAKSYIDKGELV) is NMP. AMP contacts are provided by residues threonine 31, arginine 36, 57 to 59 (ELV), 86 to 89 (GYPR), and glutamine 93. An LID region spans residues 127–159 (GRIINRKTGETFHKVFNPPVDYKEEDYYQREDD). ATP contacts are provided by residues arginine 128 and 137–138 (TF). Positions 156 and 167 each coordinate AMP. Glutamine 195 contributes to the ATP binding site.

Monomer.

Its subcellular location is the cytoplasm. The catalysed reaction is AMP + ATP = 2 ADP. It participates in purine metabolism; AMP biosynthesis via salvage pathway; AMP from ADP: step 1/1. Functionally, catalyzes the reversible transfer of the terminal phosphate group between ATP and AMP. Plays an important role in cellular energy homeostasis and in adenine nucleotide metabolism. The chain is Adenylate kinase from Streptococcus pyogenes serotype M6 (strain ATCC BAA-946 / MGAS10394).